A 333-amino-acid chain; its full sequence is Olfactory receptor 1078 (333 aa).

Residues 1–25 are Extracellular-facing; the sequence is MDSSNRTRVSEFLLLGFVENKDLQP. The N-linked (GlcNAc...) asparagine glycan is linked to asparagine 5. The helical transmembrane segment at 26–50 threads the bilayer; sequence LIYGLFLSMYLVTVIGNISIIVAII. Residues 51–57 lie on the Cytoplasmic side of the membrane; the sequence is SDPCLHT. A helical transmembrane segment spans residues 58-79; sequence PMYFFLSNLSFVDICFISTTVP. At 80-100 the chain is on the extracellular side; that stretch reads KMLVNIQTQNNVITYAGCITQ. An intrachain disulfide couples cysteine 97 to cysteine 189. Residues 101 to 120 traverse the membrane as a helical segment; the sequence is IYFFLLFVELDNFLLTIMAY. The Cytoplasmic portion of the chain corresponds to 121-139; sequence DRYVAICHPMHYTVIMNYK. Residues 140–158 form a helical membrane-spanning segment; the sequence is LCGFLVLVSWIVSVLHALF. The Extracellular portion of the chain corresponds to 159–196; the sequence is QSLMMLALPFCTHLEIPHYFCEPNQVIQLTCSDAFLND. A helical transmembrane segment spans residues 197-219; it reads LVIYFTLVLLATVPLAGIFYSYF. Residues 220 to 236 are Cytoplasmic-facing; that stretch reads KIVSSICAISSVHGKYK. A helical membrane pass occupies residues 237–260; it reads AFSTCASHLSVVSLFYCTGLGVYL. The Extracellular segment spans residues 261–272; that stretch reads SSAANNSSQASA. The chain crosses the membrane as a helical span at residues 273–292; sequence TASVMYTVVTPMVNPFIYSL. Topologically, residues 293-333 are cytoplasmic; it reads RNKDVKSVLKKTLCEEVIRSPPSLLHFFLVLCHLPCFIFCY.

The protein belongs to the G-protein coupled receptor 1 family. In terms of tissue distribution, olfactory epithelium.

The protein resides in the cell membrane. Odorant receptor. In Rattus norvegicus (Rat), this protein is Olfactory receptor 1078 (Olr1078).